Consider the following 643-residue polypeptide: Phosphomethylpyrimidine synthase (643 aa).

Substrate-binding positions include asparagine 248, methionine 277, tyrosine 306, histidine 342, serine 362–glycine 364, aspartate 403–arginine 406, and glutamate 442. Histidine 446 provides a ligand contact to Zn(2+). Residue tyrosine 469 participates in substrate binding. Residue histidine 510 coordinates Zn(2+). [4Fe-4S] cluster contacts are provided by cysteine 590, cysteine 593, and cysteine 598.

This sequence belongs to the ThiC family. As to quaternary structure, homodimer. The cofactor is [4Fe-4S] cluster.

The enzyme catalyses 5-amino-1-(5-phospho-beta-D-ribosyl)imidazole + S-adenosyl-L-methionine = 4-amino-2-methyl-5-(phosphooxymethyl)pyrimidine + CO + 5'-deoxyadenosine + formate + L-methionine + 3 H(+). Its pathway is cofactor biosynthesis; thiamine diphosphate biosynthesis. Its function is as follows. Catalyzes the synthesis of the hydroxymethylpyrimidine phosphate (HMP-P) moiety of thiamine from aminoimidazole ribotide (AIR) in a radical S-adenosyl-L-methionine (SAM)-dependent reaction. This Burkholderia cenocepacia (strain HI2424) protein is Phosphomethylpyrimidine synthase.